The sequence spans 219 residues: Probable glucosamine 6-phosphate N-acetyltransferase (219 aa).

The region spanning 42–198 (MKVRPLKDTD…EGPTLKRNAT (157 aa)) is the N-acetyltransferase domain. Residues threonine 64, 111–114 (KFIH), and 123–125 (EDV) each bind substrate. Position 133-138 (133-138 (GKQLGK)) interacts with acetyl-CoA. Residues 154–155 (YK) and arginine 186 each bind substrate.

It belongs to the acetyltransferase family. GNA1 subfamily.

It carries out the reaction D-glucosamine 6-phosphate + acetyl-CoA = N-acetyl-D-glucosamine 6-phosphate + CoA + H(+). The protein operates within nucleotide-sugar biosynthesis; UDP-N-acetyl-alpha-D-glucosamine biosynthesis; N-acetyl-alpha-D-glucosamine 1-phosphate from alpha-D-glucosamine 6-phosphate (route I): step 1/2. The polypeptide is Probable glucosamine 6-phosphate N-acetyltransferase (Drosophila melanogaster (Fruit fly)).